The primary structure comprises 785 residues: Phosphoinositide phosphatase SAC5 (785 aa).

Residues 158 to 533 (LSVVDLSKNF…GNTLAMQYGG (376 aa)) form the SAC domain. The short motif at 469 to 480 (RTNCIDCLDRTN) is the Phosphatase catalytic core element. Over residues 688-700 (GSGQMFQGSSSNS) the composition is skewed to polar residues. Residues 688–707 (GSGQMFQGSSSNSDSHRPND) form a disordered region.

Component of the PI(3,5)P2 regulatory complex at least composed of ATG18, SAC/FIG4, FAB1 and VAC14. Requires Mg(2+) as cofactor. Ubiquitous with a higher level of expression in young seedlings than in other tissues.

It is found in the vacuole membrane. It catalyses the reaction a 1,2-diacyl-sn-glycero-3-phospho-(1D-myo-inositol-3,5-bisphosphate) + H2O = a 1,2-diacyl-sn-glycero-3-phospho-(1D-myo-inositol-3-phosphate) + phosphate. The PI(3,5)P2 regulatory complex regulates both the synthesis and turnover of phosphatidylinositol 3,5-bisphosphate (PtdIns(3,5)P2). The sequence is that of Phosphoinositide phosphatase SAC5 (SAC5) from Arabidopsis thaliana (Mouse-ear cress).